We begin with the raw amino-acid sequence, 86 residues long: Chymotrypsin inhibitor (86 aa).

The signal sequence occupies residues 1-22 (MKLLFAIVALLALAFLCADISA).

This sequence belongs to the protease inhibitor I13 (potato type I serine protease inhibitor) family. As to quaternary structure, monomer. As to expression, expressed in the body wall, coelomocytes and at a lower level in intestine.

The protein resides in the secreted. Functionally, inhibits L.terrestris digestive chymotrypsin LT_CH 1 and bovine alpha-chymotrypsin. The protein is Chymotrypsin inhibitor of Lumbricus terrestris (Common earthworm).